Here is a 70-residue protein sequence, read N- to C-terminus: Cytochrome c oxidase subunit 8B, mitochondrial (70 aa).

Residues 1–24 constitute a mitochondrion transit peptide; the sequence is MPRLPPILRLLQAPEKYTVIPKAR. Topologically, residues 25–35 are mitochondrial matrix; that stretch reads ISSKPAKSPTS. A helical transmembrane segment spans residues 36 to 59; sequence AMDQAVGMSVIIAGFMVPAGWVLS. Over 60 to 70 the chain is Mitochondrial intermembrane; sequence HLESYKRSSAA.

Belongs to the cytochrome c oxidase VIII family. As to quaternary structure, component of the cytochrome c oxidase (complex IV, CIV), a multisubunit enzyme composed of 14 subunits. The complex is composed of a catalytic core of 3 subunits MT-CO1, MT-CO2 and MT-CO3, encoded in the mitochondrial DNA, and 11 supernumerary subunits COX4I, COX5A, COX5B, COX6A, COX6B, COX6C, COX7A, COX7B, COX7C, COX8 and NDUFA4, which are encoded in the nuclear genome. The complex exists as a monomer or a dimer and forms supercomplexes (SCs) in the inner mitochondrial membrane with NADH-ubiquinone oxidoreductase (complex I, CI) and ubiquinol-cytochrome c oxidoreductase (cytochrome b-c1 complex, complex III, CIII), resulting in different assemblies (supercomplex SCI(1)III(2)IV(1) and megacomplex MCI(2)III(2)IV(2)).

It is found in the mitochondrion inner membrane. It participates in energy metabolism; oxidative phosphorylation. In terms of biological role, component of the cytochrome c oxidase, the last enzyme in the mitochondrial electron transport chain which drives oxidative phosphorylation. The respiratory chain contains 3 multisubunit complexes succinate dehydrogenase (complex II, CII), ubiquinol-cytochrome c oxidoreductase (cytochrome b-c1 complex, complex III, CIII) and cytochrome c oxidase (complex IV, CIV), that cooperate to transfer electrons derived from NADH and succinate to molecular oxygen, creating an electrochemical gradient over the inner membrane that drives transmembrane transport and the ATP synthase. Cytochrome c oxidase is the component of the respiratory chain that catalyzes the reduction of oxygen to water. Electrons originating from reduced cytochrome c in the intermembrane space (IMS) are transferred via the dinuclear copper A center (CU(A)) of subunit 2 and heme A of subunit 1 to the active site in subunit 1, a binuclear center (BNC) formed by heme A3 and copper B (CU(B)). The BNC reduces molecular oxygen to 2 water molecules using 4 electrons from cytochrome c in the IMS and 4 protons from the mitochondrial matrix. The polypeptide is Cytochrome c oxidase subunit 8B, mitochondrial (Cox8b) (Rattus norvegicus (Rat)).